Here is a 76-residue protein sequence, read N- to C-terminus: Kappa-scoloptoxin(15)-Ssd3a (76 aa).

Positions 1–23 (MEGKIIFICFLVVLLTLPELISS) are cleaved as a signal peptide.

Post-translationally, contains 2 disulfide bonds. In terms of tissue distribution, expressed by the venom gland.

It localises to the secreted. Functionally, acts as a voltage-gated potassium channel inhibitor. The chain is Kappa-scoloptoxin(15)-Ssd3a from Scolopendra dehaani (Thai centipede).